Reading from the N-terminus, the 957-residue chain is Glycine dehydrogenase (decarboxylating) (957 aa).

Lys704 is modified (N6-(pyridoxal phosphate)lysine).

It belongs to the GcvP family. The glycine cleavage system is composed of four proteins: P, T, L and H. Pyridoxal 5'-phosphate is required as a cofactor.

The enzyme catalyses N(6)-[(R)-lipoyl]-L-lysyl-[glycine-cleavage complex H protein] + glycine + H(+) = N(6)-[(R)-S(8)-aminomethyldihydrolipoyl]-L-lysyl-[glycine-cleavage complex H protein] + CO2. Its function is as follows. The glycine cleavage system catalyzes the degradation of glycine. The P protein binds the alpha-amino group of glycine through its pyridoxal phosphate cofactor; CO(2) is released and the remaining methylamine moiety is then transferred to the lipoamide cofactor of the H protein. The chain is Glycine dehydrogenase (decarboxylating) from Bordetella petrii (strain ATCC BAA-461 / DSM 12804 / CCUG 43448).